The primary structure comprises 321 residues: Calcium-regulated beta-propeller protein CarP (321 aa).

The first 42 residues, 1–42, serve as a signal peptide directing secretion; it reads MTIHAQTPEPFSMSRAFTPRRLLLAVLLVALSALVLLGQSFR.

Belongs to the YjiK family.

The protein localises to the cell inner membrane. Its function is as follows. Plays a role in intracellular Ca(2+) homeostasis. Involved in modulating Ca(2+)-induced swarming motility and pyocyanine production. Plays a role in regulating virulence in a Ca(2+)-dependent manner. Involved in cell protection against oxidative stress in the presence of elevated Ca(2+). The polypeptide is Calcium-regulated beta-propeller protein CarP (Pseudomonas aeruginosa (strain ATCC 15692 / DSM 22644 / CIP 104116 / JCM 14847 / LMG 12228 / 1C / PRS 101 / PAO1)).